Reading from the N-terminus, the 252-residue chain is Ribosomal RNA small subunit methyltransferase J (252 aa).

S-adenosyl-L-methionine-binding positions include 101-102, 117-118, 153-154, and Asp-171; these read RD, ER, and SS.

Belongs to the methyltransferase superfamily. RsmJ family.

It is found in the cytoplasm. It catalyses the reaction guanosine(1516) in 16S rRNA + S-adenosyl-L-methionine = N(2)-methylguanosine(1516) in 16S rRNA + S-adenosyl-L-homocysteine + H(+). Specifically methylates the guanosine in position 1516 of 16S rRNA. This chain is Ribosomal RNA small subunit methyltransferase J, found in Salmonella typhi.